The chain runs to 292 residues: Rhodanese-like domain-containing protein 11, chloroplastic (292 aa).

The transit peptide at 1–56 (MESLSLPVLNPLLASGSNLFRNQHSRMTSSMVSSLKSPIGGTSLSTVRRFGVGVVR) directs the protein to the chloroplast. The Rhodanese domain maps to 101-224 (SLSNKPLLDV…AQDEDLVTEG (124 aa)). Cys184 acts as the Cysteine persulfide intermediate in catalysis.

Its subcellular location is the plastid. It localises to the chloroplast. This Arabidopsis thaliana (Mouse-ear cress) protein is Rhodanese-like domain-containing protein 11, chloroplastic (STR11).